We begin with the raw amino-acid sequence, 37 residues long: MKVRASVRKICSKCQLIWRGKRLSVVCVNPRHKQKQG.

This sequence belongs to the bacterial ribosomal protein bL36 family.

The protein resides in the plastid. It is found in the chloroplast. The polypeptide is Large ribosomal subunit protein bL36c (Gnetum parvifolium (Small-leaved jointfir)).